The primary structure comprises 203 residues: Dephospho-CoA kinase (203 aa).

Positions 10 to 203 (IIGITGNIGS…LTGGAKGGRG (194 aa)) constitute a DPCK domain. 18 to 23 (GSGKST) contributes to the ATP binding site.

It belongs to the CoaE family.

It is found in the cytoplasm. The enzyme catalyses 3'-dephospho-CoA + ATP = ADP + CoA + H(+). The protein operates within cofactor biosynthesis; coenzyme A biosynthesis; CoA from (R)-pantothenate: step 5/5. Its function is as follows. Catalyzes the phosphorylation of the 3'-hydroxyl group of dephosphocoenzyme A to form coenzyme A. The polypeptide is Dephospho-CoA kinase (Thermus thermophilus (strain ATCC BAA-163 / DSM 7039 / HB27)).